The sequence spans 670 residues: DNA ligase (670 aa).

NAD(+)-binding positions include 32 to 36 (DSEYD), 81 to 82 (SL), and E114. Catalysis depends on K116, which acts as the N6-AMP-lysine intermediate. R137, E174, K291, and K315 together coordinate NAD(+). Positions 409, 412, 427, and 433 each coordinate Zn(2+). One can recognise a BRCT domain in the interval 592–670 (ASENLFKDKT…EEEFLAQITR (79 aa)).

It belongs to the NAD-dependent DNA ligase family. LigA subfamily. Mg(2+) is required as a cofactor. The cofactor is Mn(2+).

The enzyme catalyses NAD(+) + (deoxyribonucleotide)n-3'-hydroxyl + 5'-phospho-(deoxyribonucleotide)m = (deoxyribonucleotide)n+m + AMP + beta-nicotinamide D-nucleotide.. Functionally, DNA ligase that catalyzes the formation of phosphodiester linkages between 5'-phosphoryl and 3'-hydroxyl groups in double-stranded DNA using NAD as a coenzyme and as the energy source for the reaction. It is essential for DNA replication and repair of damaged DNA. The polypeptide is DNA ligase (Haemophilus influenzae (strain 86-028NP)).